Here is a 212-residue protein sequence, read N- to C-terminus: Hemagglutinin 2 (212 aa).

It is found in the secreted. Its function is as follows. Induces agglutination of neuraminidase-treated erythrocytes. In Eikenella corrodens, this protein is Hemagglutinin 2 (hag2).